The chain runs to 522 residues: Glutamate--cysteine ligase, chloroplastic (522 aa).

The transit peptide at 1-45 (MALMSQAGSSHCIYSEKMKCISGHSSITSNMEMLKMKDICFGNIS) directs the protein to the chloroplast. C186 and C406 are oxidised to a cystine.

It belongs to the carboxylate-amine ligase family. Glutamate--cysteine ligase type 2 subfamily. As to quaternary structure, homodimer or monomer when oxidized or reduced, respectively. Post-translationally, the Cys-186-Cys-406 disulfide bridge is known to modulate the enzyme activity according to the redox status. The oxidized form constitutes the active enzyme.

Its subcellular location is the plastid. It is found in the chloroplast. The enzyme catalyses L-cysteine + L-glutamate + ATP = gamma-L-glutamyl-L-cysteine + ADP + phosphate + H(+). It participates in sulfur metabolism; glutathione biosynthesis; glutathione from L-cysteine and L-glutamate: step 1/2. In Nicotiana tabacum (Common tobacco), this protein is Glutamate--cysteine ligase, chloroplastic (GSH1).